The primary structure comprises 235 residues: Protein FAM3B (235 aa).

The signal sequence occupies residues 1 to 29 (MRPLAGGLLKVVFVVFASLCAWYSGYLLA). Cystine bridges form between Cys-63–Cys-91 and Cys-69–Cys-229. Positions 72–233 (DTYAYRLLSG…IQIEGCIPKE (162 aa)) constitute a GG-type lectin domain. N-linked (GlcNAc...) asparagine glycans are attached at residues Asn-120 and Asn-208.

Belongs to the FAM3 family. In terms of processing, 2 N-termini have been observed in the mature protein: the first at Glu-30, resulting from signal peptide cleavage, the second at Ser-46. Post-translationally, O-glycosylated. In terms of tissue distribution, highly expressed in the pancreas. Also found in the colon, kidney, prostate, small intestine and testis.

Its subcellular location is the secreted. Induces apoptosis of alpha and beta cells in a dose- and time-dependent manner. In Homo sapiens (Human), this protein is Protein FAM3B (FAM3B).